The following is a 401-amino-acid chain: MMYQPDREPGEDSCLVLSSSSVQRCTGSQRGCMPCTWAASKAFVGIGLQACVLTSSILHIDLLTRNSTCLILMIISMYVLSLIRVPISKMETIVTVCRSIQALATLVAASVWVAGSAVKKEHLLIVVTVCILFVFIAGTQISLFYVICSANGTGTHFRASLLAIIGGCVLGVSVKLVELKDVPIGIGIAIAIIASCQDFGLALRDTCHYRIGRYACMRTFTDLGRGINYRWVTDVEAVPKIEEVAEEKVSLFKFFKEMPGVIFSPAVGTHATPIIWIVLRLVYGISNVWQTPAYVVFCLTVGHVSAMLLEQLVIRVNYTAEASSGIHSTAHAVCMVLAAFGYGVAAPLSLAFTVSGGILGALYLRKRATGARRLAATHISRWLIVCVYVAAGLCYATIITH.

10 helical membrane-spanning segments follow: residues 43–63 (FVGI…IDLL), 67–87 (STCL…RVPI), 93–113 (IVTV…SVWV), 124–144 (LIVV…ISLF), 159–179 (ASLL…LVEL), 182–202 (VPIG…FGLA), 259–279 (PGVI…WIVL), 294–314 (YVVF…QLVI), 332–352 (AVCM…SLAF), and 379–399 (ISRW…ATII).

This sequence belongs to the alphaherpesvirinae HHV-1 UL43 family.

The protein localises to the membrane. The protein is Membrane protein UL43 homolog of Equine herpesvirus 1 (strain Ab4p) (EHV-1).